Here is a 448-residue protein sequence, read N- to C-terminus: Argininosuccinate synthase (448 aa).

Residues 17 to 25 (AFSGGLDTS) and Ala-43 each bind ATP. Tyr-99 is an L-citrulline binding site. ATP-binding residues include Gly-129 and Thr-131. L-aspartate contacts are provided by Thr-131, Asn-135, and Asp-136. Asn-135 is a binding site for L-citrulline. Position 136 (Asp-136) interacts with ATP. The L-citrulline site is built by Arg-139 and Ser-192. Asp-194 is an ATP binding site. 3 residues coordinate L-citrulline: Thr-201, Glu-203, and Glu-280.

Belongs to the argininosuccinate synthase family. Type 2 subfamily. As to quaternary structure, homotetramer.

Its subcellular location is the cytoplasm. The catalysed reaction is L-citrulline + L-aspartate + ATP = 2-(N(omega)-L-arginino)succinate + AMP + diphosphate + H(+). The protein operates within amino-acid biosynthesis; L-arginine biosynthesis; L-arginine from L-ornithine and carbamoyl phosphate: step 2/3. In Pectobacterium carotovorum subsp. carotovorum (strain PC1), this protein is Argininosuccinate synthase.